Reading from the N-terminus, the 652-residue chain is Carboxypeptidase S1 homolog A (652 aa).

The first 19 residues, 1 to 19 (MRLAASIAVALPVIGAASA), serve as a signal peptide directing secretion. A disulfide bond links Cys-50 and Cys-121. Asn-77, Asn-132, Asn-161, Asn-168, Asn-184, and Asn-202 each carry an N-linked (GlcNAc...) asparagine glycan. Ser-238 is an active-site residue. N-linked (GlcNAc...) asparagine glycans are attached at residues Asn-260, Asn-299, Asn-347, and Asn-410. 2 cysteine pairs are disulfide-bonded: Cys-325-Cys-361 and Cys-332-Cys-354. Residue Asp-458 is part of the active site. Cys-461 lines the substrate pocket. 3 N-linked (GlcNAc...) asparagine glycosylation sites follow: Asn-474, Asn-492, and Asn-505. Residue His-516 is part of the active site. Residue Glu-517 participates in substrate binding. Asn-594 carries an N-linked (GlcNAc...) asparagine glycan. Residues 608–628 (AASKGNPPPTTTSSPTASPTA) form a disordered region. Residues 618-628 (TTSSPTASPTA) are compositionally biased toward low complexity. Gly-629 carries the GPI-anchor amidated glycine lipid modification. A propeptide spans 630 to 652 (SAMLKAPVAMLAISALTVLAFYL) (removed in mature form).

It belongs to the peptidase S10 family.

The protein localises to the cell membrane. The enzyme catalyses Preferential release of a C-terminal arginine or lysine residue.. In terms of biological role, extracellular serine carboxypeptidase that contributes to pathogenicity. The protein is Carboxypeptidase S1 homolog A (SCPA) of Arthroderma benhamiae (strain ATCC MYA-4681 / CBS 112371) (Trichophyton mentagrophytes).